A 484-amino-acid polypeptide reads, in one-letter code: 3-isopropylmalate dehydratase large subunit (484 aa).

Cys352, Cys412, and Cys415 together coordinate [4Fe-4S] cluster. The segment at 463 to 484 (TLSSPSDLDPAPASAAIRTDAA) is disordered. Low complexity predominate over residues 464 to 478 (LSSPSDLDPAPASAA).

The protein belongs to the aconitase/IPM isomerase family. LeuC type 1 subfamily. In terms of assembly, heterodimer of LeuC and LeuD. The cofactor is [4Fe-4S] cluster.

The catalysed reaction is (2R,3S)-3-isopropylmalate = (2S)-2-isopropylmalate. The protein operates within amino-acid biosynthesis; L-leucine biosynthesis; L-leucine from 3-methyl-2-oxobutanoate: step 2/4. Functionally, catalyzes the isomerization between 2-isopropylmalate and 3-isopropylmalate, via the formation of 2-isopropylmaleate. The polypeptide is 3-isopropylmalate dehydratase large subunit (Pseudarthrobacter chlorophenolicus (strain ATCC 700700 / DSM 12829 / CIP 107037 / JCM 12360 / KCTC 9906 / NCIMB 13794 / A6) (Arthrobacter chlorophenolicus)).